Consider the following 131-residue polypeptide: Lymphocyte antigen 6C2 (131 aa).

The first 26 residues, 1 to 26 (MDSTHATKSCLLILLVALLCAGRAQG), serve as a signal peptide directing secretion. Residues 27 to 116 (LQCYECYGVP…TAGSTWTMAG (90 aa)) form the UPAR/Ly6 domain. 5 cysteine pairs are disulfide-bonded: cysteine 29–cysteine 53, cysteine 32–cysteine 41, cysteine 46–cysteine 74, cysteine 78–cysteine 95, and cysteine 96–cysteine 101. Glycine 109 carries the GPI-anchor amidated glycine lipid modification. Positions 110-131 (STWTMAGVLLFSLSSVILQTLL) are cleaved as a propeptide — removed in mature form.

Its subcellular location is the cell membrane. The polypeptide is Lymphocyte antigen 6C2 (Ly6c2) (Mus musculus (Mouse)).